The following is a 187-amino-acid chain: Endoribonuclease YbeY (187 aa).

Residues His-148, His-152, and His-158 each coordinate Zn(2+).

It belongs to the endoribonuclease YbeY family. Zn(2+) is required as a cofactor.

Its subcellular location is the cytoplasm. Functionally, single strand-specific metallo-endoribonuclease involved in late-stage 70S ribosome quality control and in maturation of the 3' terminus of the 16S rRNA. The sequence is that of Endoribonuclease YbeY from Ralstonia nicotianae (strain ATCC BAA-1114 / GMI1000) (Ralstonia solanacearum).